Here is a 314-residue protein sequence, read N- to C-terminus: Melanoma-associated antigen 2 (314 aa).

The span at 1–20 (MPLEQRSQHCKPEEGLEARG) shows a compositional bias: basic and acidic residues. Positions 1-69 (MPLEQRSQHC…SPPHSPQGAS (69 aa)) are disordered. The segment covering 21–44 (EALGLVGAQAPATEEQQTASSSST) has biased composition (low complexity). Serine 64 is modified (phosphoserine). The MAGE domain occupies 109-308 (ISRKMVELVH…ISYPPLHERA (200 aa)).

As to quaternary structure, interacts with TRIM28 and UBE2H. Interacts with HDAC3. Interacts with PML (isoform PML-1, isoform PML-2, isoform PML-3, isoform PML-4 and isoform PML-5). In terms of tissue distribution, expressed in many tumors of several types, such as melanoma, head and neck squamous cell carcinoma, lung carcinoma and breast carcinoma, but not in normal tissues except for testes.

Its subcellular location is the nucleus. It is found in the PML body. In terms of biological role, reduces p53/TP53 transactivation function through recruitment of HDAC3 to p53/TP53 transcription sites. Also represses p73/TP73 activity. Proposed to enhance ubiquitin ligase activity of RING-type zinc finger-containing E3 ubiquitin-protein ligases. In vitro enhances ubiquitin ligase activity of TRIM28 and stimulates p53/TP53 ubiquitination by TRIM28 potentially in presence of Ubl-conjugating enzyme UBE2H. Proposed to act through recruitment and/or stabilization of the Ubl-conjugating enzyme (E2) at the E3:substrate complex. May play a role in embryonal development and tumor transformation or aspects of tumor progression. In vitro promotes cell viability in melanoma cell lines. Antigen recognized on a melanoma by autologous cytolytic T-lymphocytes. Negatively regulates acetylation and sumoylation of PML and represses PML-induced p53/TP53 acetylation and activation. This chain is Melanoma-associated antigen 2 (MAGEA2), found in Homo sapiens (Human).